Reading from the N-terminus, the 50-residue chain is Protein PsbN (50 aa).

Residues I14–F34 form a helical membrane-spanning segment.

The protein belongs to the PsbN family.

It localises to the cellular thylakoid membrane. May play a role in photosystem I and II biogenesis. The polypeptide is Protein PsbN (Prochlorococcus marinus (strain MIT 9215)).